The primary structure comprises 501 residues: Aspartyl/glutamyl-tRNA(Asn/Gln) amidotransferase subunit B (501 aa).

Positions 271–299 (VQETRHYQETDGSTSKGRPKETAEDYRYF) are disordered. Positions 288–299 (RPKETAEDYRYF) are enriched in basic and acidic residues.

The protein belongs to the GatB/GatE family. GatB subfamily. As to quaternary structure, heterotrimer of A, B and C subunits.

It catalyses the reaction L-glutamyl-tRNA(Gln) + L-glutamine + ATP + H2O = L-glutaminyl-tRNA(Gln) + L-glutamate + ADP + phosphate + H(+). It carries out the reaction L-aspartyl-tRNA(Asn) + L-glutamine + ATP + H2O = L-asparaginyl-tRNA(Asn) + L-glutamate + ADP + phosphate + 2 H(+). Its function is as follows. Allows the formation of correctly charged Asn-tRNA(Asn) or Gln-tRNA(Gln) through the transamidation of misacylated Asp-tRNA(Asn) or Glu-tRNA(Gln) in organisms which lack either or both of asparaginyl-tRNA or glutaminyl-tRNA synthetases. The reaction takes place in the presence of glutamine and ATP through an activated phospho-Asp-tRNA(Asn) or phospho-Glu-tRNA(Gln). In Corynebacterium diphtheriae (strain ATCC 700971 / NCTC 13129 / Biotype gravis), this protein is Aspartyl/glutamyl-tRNA(Asn/Gln) amidotransferase subunit B.